A 597-amino-acid polypeptide reads, in one-letter code: Alpha-1,2-mannosyltransferase MNN2 (597 aa).

The Cytoplasmic segment spans residues 1–12 (MLLTKRFSKLFK). The chain crosses the membrane as a helical; Signal-anchor for type II membrane protein span at residues 13-28 (LTFIVLILCGLFVITN). The Extracellular portion of the chain corresponds to 29–597 (KYMDENTSVK…STHDKAIAGK (569 aa)). 3 N-linked (GlcNAc...) asparagine glycosylation sites follow: N34, N363, and N473.

It belongs to the MNN1/MNT family. Interacts with SVP26.

The protein resides in the golgi apparatus membrane. The protein operates within protein modification; protein glycosylation. Its function is as follows. Alpha-1,2-mannosyltransferase, responsible for addition of the first alpha-1,2-linked mannose to form the branches on the mannan backbone of oligosaccharides. The chain is Alpha-1,2-mannosyltransferase MNN2 (MNN2) from Saccharomyces cerevisiae (strain ATCC 204508 / S288c) (Baker's yeast).